The sequence spans 91 residues: Methanol dehydrogenase [cytochrome c] subunit 2 (91 aa).

The signal sequence occupies residues 1–22 (MKHVLTLLALASVFAVSNQALA). C28 and C34 are oxidised to a cystine.

It belongs to the methanol dehydrogenase subunit 2 family. In terms of assembly, heterotetramer composed of 2 alpha and 2 beta subunits.

Its subcellular location is the cell inner membrane. The enzyme catalyses 2 Fe(III)-[cytochrome cL] + a primary alcohol = 2 Fe(II)-[cytochrome cL] + an aldehyde + 2 H(+). In terms of biological role, catalyzes the oxidation of primary alcohols including methanol. In Methylophilus methylotrophus (Bacterium W3A1), this protein is Methanol dehydrogenase [cytochrome c] subunit 2 (moxI).